The primary structure comprises 204 residues: Guanylate kinase (204 aa).

Positions 16–196 constitute a Guanylate kinase-like domain; it reads AKVIIFSAPS…AKAHALKVIK (181 aa). 23–30 provides a ligand contact to ATP; that stretch reads APSGSGKS.

This sequence belongs to the guanylate kinase family.

The protein resides in the cytoplasm. It catalyses the reaction GMP + ATP = GDP + ADP. Its function is as follows. Essential for recycling GMP and indirectly, cGMP. The sequence is that of Guanylate kinase from Bacteroides fragilis (strain ATCC 25285 / DSM 2151 / CCUG 4856 / JCM 11019 / LMG 10263 / NCTC 9343 / Onslow / VPI 2553 / EN-2).